We begin with the raw amino-acid sequence, 139 residues long: Small ribosomal subunit protein bS6 (139 aa).

Residues 118–139 (SFKGGSKIETPTGSESTDIQEK) form a disordered region. Residues 126–139 (ETPTGSESTDIQEK) are compositionally biased toward polar residues.

It belongs to the bacterial ribosomal protein bS6 family.

Binds together with bS18 to 16S ribosomal RNA. In Borrelia garinii subsp. bavariensis (strain ATCC BAA-2496 / DSM 23469 / PBi) (Borreliella bavariensis), this protein is Small ribosomal subunit protein bS6.